The primary structure comprises 590 residues: Probable metalloendopeptidase G1-type (590 aa).

H41 is a Zn(2+) binding site. The active site involves E44. A Zn(2+)-binding site is contributed by H45.

This sequence belongs to the peptidase M44 family. Requires Zn(2+) as cofactor.

Its function is as follows. Seems to be involved in viral proteins maturation by cleavage at Ala-Gly-|-Xaa motifs. The polypeptide is Probable metalloendopeptidase G1-type (Homo sapiens (Human)).